The chain runs to 656 residues: Nuclear pore complex protein Nup85 (656 aa).

Met1 carries the post-translational modification N-acetylmethionine. Lys92 carries the N6-acetyllysine modification. Ser223 bears the Phosphoserine mark.

Belongs to the nucleoporin Nup85 family. As to quaternary structure, component of the nuclear pore complex (NPC). Component of the NPC Nup107-160 subcomplex, consisting of at least NUP107, NUP98/Nup96, NUP160, NUP133, NUP85, NUP37, NUP43 and SEC13. Interacts with NUP160, NUP133 and SEC13. Interacts with NUP37, NUP107 and NUP43. Interacts with CCR2.

Its subcellular location is the nucleus. It is found in the nuclear pore complex. The protein resides in the chromosome. The protein localises to the centromere. It localises to the kinetochore. Its subcellular location is the cytoplasm. It is found in the cytoskeleton. The protein resides in the spindle. The protein localises to the nucleus membrane. Essential component of the nuclear pore complex (NPC) that seems to be required for NPC assembly and maintenance. As part of the NPC Nup107-160 subcomplex plays a role in RNA export and in tethering NUP96/Nup98 and NUP153 to the nucleus. The Nup107-160 complex seems to be required for spindle assembly during mitosis. NUP85 is required for membrane clustering of CCL2-activated CCR2. Seems to be involved in CCR2-mediated chemotaxis of monocytes and may link activated CCR2 to the phosphatidyl-inositol 3-kinase-Rac-lammellipodium protrusion cascade. Involved in nephrogenesis. This Homo sapiens (Human) protein is Nuclear pore complex protein Nup85 (NUP85).